A 302-amino-acid polypeptide reads, in one-letter code: Exodeoxyribonuclease (302 aa).

It carries out the reaction Exonucleolytic cleavage in the 5'- to 3'-direction to yield nucleoside 5'-phosphates.. Its function is as follows. This enzyme is essential for phage DNA replication; it is believed to function in the removal of DNA-linked RNA primers. It is also necessary for host DNA degradation and phage genetic recombination. This chain is Exodeoxyribonuclease (6), found in Enterobacteria phage T3 (Bacteriophage T3).